Consider the following 67-residue polypeptide: MPQQFEQPQAQQAVTQEDDALATTQAATQTESTDQADVLDDILDDIESTLETNAEEYVNSFVQKGGE.

Residues 1–36 (MPQQFEQPQAQQAVTQEDDALATTQAATQTESTDQA) show a composition bias toward low complexity. The segment at 1-38 (MPQQFEQPQAQQAVTQEDDALATTQAATQTESTDQADV) is disordered. Positions 23–61 (TTQAATQTESTDQADVLDDILDDIESTLETNAEEYVNSF) are ARC ATPase binding. E67 is covalently cross-linked (Isoglutamyl lysine isopeptide (Glu-Lys) (interchain with K-? in acceptor proteins)).

This sequence belongs to the prokaryotic ubiquitin-like protein family. As to quaternary structure, strongly interacts with the proteasome-associated ATPase ARC through a hydrophobic interface; the interacting region of Pup lies in its C-terminal half. There is one Pup binding site per ARC hexamer ring.

Its pathway is protein degradation; proteasomal Pup-dependent pathway. Its function is as follows. Protein modifier that is covalently attached to lysine residues of substrate proteins, thereby targeting them for proteasomal degradation. The tagging system is termed pupylation. The protein is Prokaryotic ubiquitin-like protein Pup of Bifidobacterium longum subsp. infantis (strain ATCC 15697 / DSM 20088 / JCM 1222 / NCTC 11817 / S12).